A 257-amino-acid chain; its full sequence is UPF0246 protein Ent638_0568 (257 aa).

It belongs to the UPF0246 family.

The protein is UPF0246 protein Ent638_0568 of Enterobacter sp. (strain 638).